The sequence spans 589 residues: Protein FAM161B (589 aa).

Disordered regions lie at residues 1-166 (MTVG…VCSW), 265-297 (KKEQQKEDAPQRDSAAVAQTKVSPKKATSRKIP), and 386-444 (AERR…GLAS). Residues 92 to 106 (PDSDLNDAEDEEDLE) are compositionally biased toward acidic residues. Over residues 151-166 (TSDSGPPSQHRSVCSW) the composition is skewed to polar residues. A compositionally biased stretch (basic and acidic residues) spans 265 to 275 (KKEQQKEDAPQ). The segment covering 287 to 297 (SPKKATSRKIP) has biased composition (basic residues). Positions 386 to 396 (AERRETRETTR) are enriched in basic and acidic residues. A coiled-coil region spans residues 510–577 (EEVFKAKLKE…ALKQAGLEEE (68 aa)).

The protein belongs to the FAM161 family. In terms of assembly, interacts with FAM161A.

The protein is Protein FAM161B (Fam161b) of Mus musculus (Mouse).